A 197-amino-acid chain; its full sequence is Large ribosomal subunit protein uL10 (197 aa).

Residues 163 to 197 (GAPAAAEAPAAEESADSAAEAAAEAPAEAPAAEEN) are disordered.

Belongs to the universal ribosomal protein uL10 family. Part of the ribosomal stalk of the 50S ribosomal subunit. The N-terminus interacts with L11 and the large rRNA to form the base of the stalk. The C-terminus forms an elongated spine to which L12 dimers bind in a sequential fashion forming a multimeric L10(L12)X complex.

Forms part of the ribosomal stalk, playing a central role in the interaction of the ribosome with GTP-bound translation factors. This is Large ribosomal subunit protein uL10 from Pseudarthrobacter chlorophenolicus (strain ATCC 700700 / DSM 12829 / CIP 107037 / JCM 12360 / KCTC 9906 / NCIMB 13794 / A6) (Arthrobacter chlorophenolicus).